The chain runs to 811 residues: Beta-catenin homolog sys-1 (811 aa).

Positions 1–105 (MHSTGEPQRG…SRGPAAPAQN (105 aa)) are disordered. A compositionally biased stretch (low complexity) spans 64 to 103 (QQQQMTPQALSTQQQQQVQQQQQRQLYSSPSPSRGPAAPA).

Interacts with TCF transcription factor pop-1 (via N-terminal region); interaction is direct.

The protein localises to the nucleus. It is found in the cytoplasm. It localises to the cytoplasmic granule. The protein resides in the cytoskeleton. Its subcellular location is the microtubule organizing center. The protein localises to the centrosome. It is found in the chromosome. It localises to the centromere. The protein resides in the kinetochore. In terms of biological role, transcription coregulator. Part of the Wnt signaling asymmetry pathway, probably acting downstream of putative frizzled ligand mom-2, Wnt/frizzled receptors lin-17 and mom-5, and dishevelled homolog dsh-2. Activates or represses target gene expression, depending on upstream Wnt signals and interactions with transcription factors, such as pop-1. Required for the activation of Wnt-responsive genes in the E blastomere; thereby leading to a role in endoderm specification and gut development. Reciprocal distribution patterns of sys-1 and pop-1/TCF in the daughters of anterior-posterior cell divisions functions in specifying cell fate; a higher sys-1 to pop-1 ratio promotes the posterior cell fate, whereas a low sys-1 to pop-1 ratio promotes the anterior fate. Represses expression of homeobox ttx-3 in neuroblasts of the SIAD/SIBV lineage, perhaps acting by blocking its transcriptional activation by a complex consisting of ref-2 and pop-1. Required for early organization of the hermaphrodite, but not the male, gonad; involved in generation of regulatory cells, known as the distal tip cells (DTC), and in formation of the somatic gonadal primordium. Involved in regulating asymmetric divisions of the somatic gonadal precursor cells (SGP), Z1 and Z4. In Caenorhabditis elegans, this protein is Beta-catenin homolog sys-1.